A 353-amino-acid polypeptide reads, in one-letter code: MTDRFQQLLASIKPVDMNLTSAVKAHLDDLTKPQGSLGRLEEIAMKYCIATGTSKPSLSKKKVFCFAGDHGVAAEGVSAFPAEVTPQMVYNMLGGGAAINVLSRHAGADLEVVDMGVNHDFAEHPMLRRCKVKHGSANMAEGPAMSIDETLQAIMAGAELAIEAREQGYELLATGEMGIANTTPATALYSVLLDMSVNAITGRGTGIDDERLHHKIAVIEKAIEVNRANLATPLEVLAALGGFEIAGICGLILGAASVGMPVVVDGFISSSAAVCAIKLSCKVSDYLFFSHLSNEQGHRAVMQKLGARPILDLDLRLGEGTGAAMAMQVIEASLKIYNEMATFSSAGVSGKND.

The active-site Proton acceptor is the glutamate 319.

This sequence belongs to the CobT family.

The enzyme catalyses 5,6-dimethylbenzimidazole + nicotinate beta-D-ribonucleotide = alpha-ribazole 5'-phosphate + nicotinate + H(+). The protein operates within nucleoside biosynthesis; alpha-ribazole biosynthesis; alpha-ribazole from 5,6-dimethylbenzimidazole: step 1/2. Catalyzes the synthesis of alpha-ribazole-5'-phosphate from nicotinate mononucleotide (NAMN) and 5,6-dimethylbenzimidazole (DMB). The chain is Nicotinate-nucleotide--dimethylbenzimidazole phosphoribosyltransferase from Chlorobaculum parvum (strain DSM 263 / NCIMB 8327) (Chlorobium vibrioforme subsp. thiosulfatophilum).